The following is a 94-amino-acid chain: MGSELETAMETLINVFHAHSGKEGDKYKLSKKELKDLLQTELSSFLDVQKDADAVDKIMKELDENGDGEVDFQEFVVLVAALTVACNNFFWENS.

EF-hand domains lie at 13-48 (INVF…FLDV) and 50-85 (KDAD…LTVA). Ca(2+) is bound by residues K28, E33, D63, N65, D67, E69, and E74. Position 86 is an S-nitrosocysteine (C86).

This sequence belongs to the S-100 family. Dimer of either two alpha chains, or two beta chains, or one alpha and one beta chain. Also forms heterodimers with S100P. Interacts with AGER. Interacts with CAPZA1. Interacts with FKBP4. Interacts with RYR1 and RYR2. Interacts with CACYBP in a calcium-dependent manner. Interacts with PPP5C (via TPR repeats); the interaction is calcium-dependent and modulates PPP5C activity. Interacts with ATP2A2 and PLN in a Ca(2+)-dependent manner. Interacts with mitochondrial F1-ATPase subunits ATP5F1A and ATP5F1B; these interactions increase F1-ATPase activity. In terms of processing, glutathionylated; glutathionylation increases affinity to calcium about 10-fold. In terms of tissue distribution, although predominant among the water-soluble brain proteins, S100 is also found in a variety of other tissues.

The protein localises to the cytoplasm. Its subcellular location is the sarcoplasmic reticulum. The protein resides in the mitochondrion. In terms of biological role, small calcium binding protein that plays important roles in several biological processes such as Ca(2+) homeostasis, chondrocyte biology and cardiomyocyte regulation. In response to an increase in intracellular Ca(2+) levels, binds calcium which triggers conformational changes. These changes allow interactions with specific target proteins and modulate their activity. Regulates a network in cardiomyocytes controlling sarcoplasmic reticulum Ca(2+) cycling and mitochondrial function through interaction with the ryanodine receptors RYR1 and RYR2, sarcoplasmic reticulum Ca(2+)-ATPase/ATP2A2 and mitochondrial F1-ATPase. Facilitates diastolic Ca(2+) dissociation and myofilament mechanics in order to improve relaxation during diastole. This chain is Protein S100-A1 (S100a1), found in Rattus norvegicus (Rat).